The chain runs to 447 residues: Peptide-N(4)-(N-acetyl-beta-glucosaminyl)asparagine amidase (447 aa).

Cys-209, Cys-212, Cys-241, and Cys-244 together coordinate Zn(2+). The Nucleophile role is filled by Cys-267. Active-site residues include His-294 and Asp-311.

Belongs to the transglutaminase-like superfamily. PNGase family. Zn(2+) serves as cofactor.

The protein resides in the cytoplasm. It carries out the reaction Hydrolysis of an N(4)-(acetyl-beta-D-glucosaminyl)asparagine residue in which the glucosamine residue may be further glycosylated, to yield a (substituted) N-acetyl-beta-D-glucosaminylamine and a peptide containing an aspartate residue.. Functionally, specifically deglycosylates the denatured form of N-linked glycoproteins in the cytoplasm and assists their proteasome-mediated degradation. Cleaves the beta-aspartyl-glucosamine (GlcNAc) of the glycan and the amide side chain of Asn, converting Asn to Asp. Prefers proteins containing high-mannose over those bearing complex type oligosaccharides. Can recognize misfolded proteins in the endoplasmic reticulum that are exported to the cytosol to be destroyed and deglycosylate them, while it has no activity toward native proteins. Deglycosylation is a prerequisite for subsequent proteasome-mediated degradation of some, but not all, misfolded glycoproteins. The protein is Peptide-N(4)-(N-acetyl-beta-glucosaminyl)asparagine amidase (PNG1) of Oryza sativa subsp. japonica (Rice).